We begin with the raw amino-acid sequence, 60 residues long: MAKQLKLTWTKSFIGCPETQRATIKSLGFKKLQQSLIKEDCPQIRGQISKVQHLLMVEEL.

The protein belongs to the universal ribosomal protein uL30 family. In terms of assembly, part of the 50S ribosomal subunit.

The chain is Large ribosomal subunit protein uL30 from Syntrophomonas wolfei subsp. wolfei (strain DSM 2245B / Goettingen).